The sequence spans 613 residues: Probable hydrolase clz13 (613 aa).

The N-terminal stretch at 1–25 (MCLLSMRFTVAILLVLLSHCGGSHA) is a signal peptide. N61, N89, N286, N422, N456, N477, and N581 each carry an N-linked (GlcNAc...) asparagine glycan.

This sequence belongs to the beta-lactamase family.

The protein operates within secondary metabolite biosynthesis. In terms of biological role, probable hydrolase; part of the gene cluster that mediates the biosynthesis of squalestatin S1 (SQS1, also known as zaragozic acid A), a heavily oxidized fungal polyketide that offers potent cholesterol lowering activity by targeting squalene synthase (SS). SQS1 is composed of a 2,8-dioxobicyclic[3.2.1]octane-3,4,5-tricarboxyclic acid core that is connected to two lipophilic polyketide arms. These initial steps feature the priming of an unusual benzoic acid starter unit onto the highly reducing polyketide synthase clz14, followed by oxaloacetate extension and product release to generate a tricarboxylic acid containing product. The phenylalanine ammonia lyase (PAL) clz10 and the acyl-CoA ligase clz12 are involved in transforming phenylalanine into benzoyl-CoA. The citrate synthase-like protein clz17 is involved in connecting the C-alpha-carbons of the hexaketide chain and oxaloacetate to afford the tricarboxylic acid unit. The potential hydrolytic enzymes, clz11 and clz13, are in close proximity to pks2 and may participate in product release. On the other side, the tetraketide arm is synthesized by a the squalestatin tetraketide synthase clz2 and enzymatically esterified to the core in the last biosynthetic step, by the acetyltransferase clz6. The biosynthesis of the tetraketide must involve 3 rounds of chain extension. After the first and second rounds methyl-transfer occurs, and in all rounds of extension the ketoreductase and dehydratase are active. The enoyl reductase and C-MeT of clz2 are not active in the final round of extension. The acetyltransferase clz6 appears to have a broad substrate selectivity for its acyl CoA substrate, allowing the in vitro synthesis of novel squalestatins. The biosynthesis of SQS1 requires several oxidative steps likely performed by oxidoreductases clz3, clz15 and clz16. Finally, in support of the identification of the cluster as being responsible for SQS1 production, the cluster contains a gene encoding a putative squalene synthase (SS) clz20, suggesting a likely mechanism for self-resistance. This chain is Probable hydrolase clz13, found in Cochliobolus lunatus (Filamentous fungus).